Consider the following 330-residue polypeptide: MNDYKDIWIFAEQRNGKLMNVAIEILGEARKLADKKGVNVGAVLIGHNVENLSKDLISFGADIVYVVDNPLLSNYTTEGYAKAISELAKEYKPEVILYGATFIGRDLAPRIASRLMTGLTADCTGLDIDENGLLLQTRPAFGGNLMATIKCPDKRPQMSTVRPGVMKRAIRDDTRDGKVIKFDADINESDIRTKILSIAKEAKNVVNLEEADIIVSGGRGIGGPDGFNIIKELADVLGGVVGASRATVDAGWITSDHQVGQTGKTVRPKLYIACGISGAIQHLAGMSNSGTIVAINKNPDAPIFKFADYGIVGDLFKVIPVLIEEIKKLK.

Position 270–298 (270–298) interacts with FAD; it reads LYIACGISGAIQHLAGMSNSGTIVAINKN.

The protein belongs to the ETF alpha-subunit/FixB family. As to quaternary structure, heterodimer of an alpha and a beta subunit. Requires FAD as cofactor.

The electron transfer flavoprotein serves as a specific electron acceptor for other dehydrogenases. It transfers the electrons to the main respiratory chain via ETF-ubiquinone oxidoreductase (ETF dehydrogenase). This Thermoanaerobacterium thermosaccharolyticum (strain ATCC 7956 / DSM 571 / NCIMB 9385 / NCA 3814 / NCTC 13789 / WDCM 00135 / 2032) (Clostridium thermosaccharolyticum) protein is Electron transfer flavoprotein subunit alpha (etfA).